The primary structure comprises 297 residues: Phospholipid scramblase 2 (297 aa).

The segment at Met1–Pro72 is proline-rich domain (PRD). The Cytoplasmic portion of the chain corresponds to Met1 to Lys276. A Phosphothreonine; by PKC modification is found at Thr149. Residues Cys172, Cys173, Cys174, Cys176, and Cys177 are each lipidated (S-palmitoyl cysteine). The helical transmembrane segment at Met277–Phe293 threads the bilayer. Topologically, residues Glu294–Arg297 are extracellular.

It belongs to the phospholipid scramblase family. The cofactor is Ca(2+). Expression of isoform 1 seems restricted to testis.

It is found in the membrane. It localises to the nucleus. The enzyme catalyses a 1,2-diacyl-sn-glycero-3-phosphocholine(in) = a 1,2-diacyl-sn-glycero-3-phosphocholine(out). Functionally, may catalyze calcium-induced ATP-independent rapid bidirectional and non-specific movement of phospholipids (lipid scrambling or lipid flip-flop) between the inner and outer leaflet of the plasma membrane. Has no phospholipid scramblase activity, due to the lack of a N-terminal proline-rich domain. The sequence is that of Phospholipid scramblase 2 from Homo sapiens (Human).